A 129-amino-acid polypeptide reads, in one-letter code: Phosphoribosyl-AMP cyclohydrolase (129 aa).

Aspartate 76 serves as a coordination point for Mg(2+). Position 77 (cysteine 77) interacts with Zn(2+). Positions 78 and 80 each coordinate Mg(2+). Residues cysteine 97 and cysteine 104 each coordinate Zn(2+).

This sequence belongs to the PRA-CH family. In terms of assembly, homodimer. Mg(2+) serves as cofactor. The cofactor is Zn(2+).

The protein localises to the cytoplasm. It catalyses the reaction 1-(5-phospho-beta-D-ribosyl)-5'-AMP + H2O = 1-(5-phospho-beta-D-ribosyl)-5-[(5-phospho-beta-D-ribosylamino)methylideneamino]imidazole-4-carboxamide. It functions in the pathway amino-acid biosynthesis; L-histidine biosynthesis; L-histidine from 5-phospho-alpha-D-ribose 1-diphosphate: step 3/9. Functionally, catalyzes the hydrolysis of the adenine ring of phosphoribosyl-AMP. This is Phosphoribosyl-AMP cyclohydrolase from Leptothrix cholodnii (strain ATCC 51168 / LMG 8142 / SP-6) (Leptothrix discophora (strain SP-6)).